Consider the following 109-residue polypeptide: Large ribosomal subunit protein uL22 (109 aa).

The protein belongs to the universal ribosomal protein uL22 family. As to quaternary structure, part of the 50S ribosomal subunit.

Functionally, this protein binds specifically to 23S rRNA; its binding is stimulated by other ribosomal proteins, e.g. L4, L17, and L20. It is important during the early stages of 50S assembly. It makes multiple contacts with different domains of the 23S rRNA in the assembled 50S subunit and ribosome. Its function is as follows. The globular domain of the protein is located near the polypeptide exit tunnel on the outside of the subunit, while an extended beta-hairpin is found that lines the wall of the exit tunnel in the center of the 70S ribosome. The polypeptide is Large ribosomal subunit protein uL22 (Methylibium petroleiphilum (strain ATCC BAA-1232 / LMG 22953 / PM1)).